Consider the following 809-residue polypeptide: Chloride channel protein F (809 aa).

Residues 1-65 (MSTSKYSKMI…SWAKFARLNN (65 aa)) are Cytoplasmic-facing. 11 helical membrane-spanning segments follow: residues 66-86 (FYIWLFLAAVGLLGSIYLVAV), 110-130 (LQYLSFIAWTVALATGSCFII), 152-172 (FWNPFVVAPMVLLWKTIGLLL), 218-238 (AACCALGVAATFGSPIGGVLF), 246-266 (FYLISNYWRAFFTATVGAVGI), 295-315 (LIAFIILGVLCGLLASLFISL), 333-353 (ITPFGEVIIVAAATAILSFPL), 395-415 (GIILACFLYVVVKLVLTAVSI), 425-445 (IPLFAIGSAVGRFVGELMLVL), 459-479 (VVGAAALCGGATRTVSSAMII), and 486-506 (LTYMVPVLLGVVLSCGIGNLL). The CBS 1 domain occupies 539 to 597 (MKRDLYYVCQNTTLSQISNLLKRVDEHSIPVVSSDNDLQLIGTISTTTLEEVIAYHERL). Disordered regions lie at residues 604 to 646 (PLSL…NNQN) and 692 to 729 (NNNFSDNNNNYNNNNYNNNNNNNNDNNTNNDNNINNNS). Low complexity predominate over residues 620 to 646 (NDNINNNQNNNNNNNNNNNNNNSNNQN). Positions 756-809 (IDSSPFQIQETMPVRKIVFMFMMLGGNILYVTNKGKLTGVVAKTELVHQNNNKH) constitute a CBS 2 domain.

Belongs to the chloride channel (TC 2.A.49) family.

It is found in the membrane. Functionally, voltage-gated chloride channel. Chloride channels may have several functions including the regulation of cell volume, membrane potential stabilization and signal transduction. The protein is Chloride channel protein F (clcF) of Dictyostelium discoideum (Social amoeba).